The primary structure comprises 257 residues: 1-(5-phosphoribosyl)-5-[(5-phosphoribosylamino)methylideneamino] imidazole-4-carboxamide isomerase (257 aa).

The active-site Proton acceptor is Asp8. The active-site Proton donor is the Asp129.

The protein belongs to the HisA/HisF family.

Its subcellular location is the cytoplasm. The catalysed reaction is 1-(5-phospho-beta-D-ribosyl)-5-[(5-phospho-beta-D-ribosylamino)methylideneamino]imidazole-4-carboxamide = 5-[(5-phospho-1-deoxy-D-ribulos-1-ylimino)methylamino]-1-(5-phospho-beta-D-ribosyl)imidazole-4-carboxamide. The protein operates within amino-acid biosynthesis; L-histidine biosynthesis; L-histidine from 5-phospho-alpha-D-ribose 1-diphosphate: step 4/9. The sequence is that of 1-(5-phosphoribosyl)-5-[(5-phosphoribosylamino)methylideneamino] imidazole-4-carboxamide isomerase from Nostoc punctiforme (strain ATCC 29133 / PCC 73102).